Consider the following 80-residue polypeptide: Acyl carrier protein (80 aa).

A Carrier domain is found at 4 to 79 (EEIFNKIKDL…DAVSYIKSHQ (76 aa)). Ser-39 carries the post-translational modification O-(pantetheine 4'-phosphoryl)serine.

The protein belongs to the acyl carrier protein (ACP) family. Post-translationally, 4'-phosphopantetheine is transferred from CoA to a specific serine of apo-ACP by AcpS. This modification is essential for activity because fatty acids are bound in thioester linkage to the sulfhydryl of the prosthetic group.

The protein localises to the cytoplasm. It participates in lipid metabolism; fatty acid biosynthesis. Carrier of the growing fatty acid chain in fatty acid biosynthesis. The protein is Acyl carrier protein of Lactobacillus acidophilus (strain ATCC 700396 / NCK56 / N2 / NCFM).